We begin with the raw amino-acid sequence, 283 residues long: Nickel/cobalt efflux system RcnA (283 aa).

Residues 1–12 lie on the Periplasmic side of the membrane; the sequence is MTEFTTLLQQGN. Residues 13–33 form a helical membrane-spanning segment; that stretch reads AWFFIPSAILLGALHGLEPGH. Residues 34 to 56 lie on the Cytoplasmic side of the membrane; the sequence is SKTMMAAFIIAIKGTIKQAVMLG. Residues 57–77 form a helical membrane-spanning segment; the sequence is LAATISHTAVVWLIAFGGMVI. Residues 78–86 are Periplasmic-facing; it reads SKRFTAQSA. A helical transmembrane segment spans residues 87-107; sequence EPWLQLISAVIIISTAFWMFW. Over 108 to 184 the chain is Cytoplasmic; that stretch reads RTWRGERNWL…DGREVTNWQI (77 aa). The interval 127-162 is disordered; the sequence is DHEHHQDHDHDHDHDHDHEHHHHHEHGDNEEYQDAH. Composition is skewed to basic and acidic residues over residues 129–144 and 151–162; these read EHHQ…DHDH and EHGDNEEYQDAH. A helical transmembrane segment spans residues 185–205; that stretch reads LLFGLTGGLIPCPAAITVLLI. At 206–218 the chain is on the periplasmic side; it reads CIQLKALTLGATL. A helical membrane pass occupies residues 219–239; sequence VVSFSIGLALTLVTVGVGAAI. Residues 240 to 260 are Cytoplasmic-facing; it reads SVQQVAKRWSGFNTLAKRAPY. A helical transmembrane segment spans residues 261 to 281; sequence FSSLLIGLVGVYMGVHGFMGI. Over 282–283 the chain is Periplasmic; it reads MR.

Belongs to the NiCoT transporter (TC 2.A.52) family. RcnA subfamily.

Its subcellular location is the cell inner membrane. Efflux system for nickel and cobalt. This chain is Nickel/cobalt efflux system RcnA (rcnA), found in Escherichia coli O157:H7.